The chain runs to 285 residues: Methyltransferase grgD (285 aa).

The protein belongs to the methyltransferase superfamily. LaeA methyltransferase family.

It participates in secondary metabolite biosynthesis. Its function is as follows. Methyltransferase; part of the gene cluster that mediates the biosynthesis of gregatin A, a fungal polyketide featuring an alkylated furanone core. The PKS grgA synthesizes C11 and C4 polyketide chains in the presence and absence of the trans-enoyl reductase grgB, respectively. The polyketide transferase grgF is then responsible for the fusion of the two carbon chains to produce the furanone skeleton of gregatin A. Next, the cytochrome P450 monooxygenase grgG accepts performs the oxidative cyclization to furnish the gregatin scaffold and leads to the formation of desmethylgregatin A. Finally, the O-methyltransferase grgD methylates the carboxyl group of desmethylgregatin A to provide gregatin A. This chain is Methyltransferase grgD, found in Penicillium sp.